We begin with the raw amino-acid sequence, 1051 residues long: Putative helicase/primase complex protein (1051 aa).

The protein belongs to the asfivirus F1055L family.

Functionally, may be involved in DNA replication. The protein is Putative helicase/primase complex protein of Ornithodoros (relapsing fever ticks).